The chain runs to 379 residues: Guanine nucleotide-binding protein G(s) subunit alpha (379 aa).

The segment at 1 to 29 (MGCFGSAGAKGDAEENKKRKEANKNINKQ) is disordered. Glycine 2 is lipidated: N-palmitoyl glycine. Residue cysteine 3 is the site of S-palmitoyl cysteine attachment. Residues 39–379 (ATHRLLLLGA…RMHLRQYELL (341 aa)) enclose the G-alpha domain. The segment at 42–55 (RLLLLGAGESGKST) is G1 motif. GTP contacts are provided by residues 47–54 (GAGESGKS), 183–189 (LRCRVLT), 208–212 (DVGGQ), 277–280 (NKQD), and alanine 351. Residues serine 54 and threonine 189 each coordinate Mg(2+). The segment at 181 to 189 (DILRCRVLT) is G2 motif. The G3 motif stretch occupies residues 204–213 (FHMFDVGGQR). Residues 273–280 (ILFLNKQD) are G4 motif. Positions 349-354 (TCAVDT) are G5 motif.

It belongs to the G-alpha family. G(s) subfamily. In terms of assembly, g proteins are composed of 3 units; alpha, beta and gamma. The alpha chain contains the guanine nucleotide binding site.

Its function is as follows. Guanine nucleotide-binding proteins (G proteins) are involved as modulators or transducers in various transmembrane signaling systems. The G(s) protein is involved in hormonal regulation of adenylate cyclase: it activates the cyclase in response to beta-adrenergic stimuli. The polypeptide is Guanine nucleotide-binding protein G(s) subunit alpha (Homarus americanus (American lobster)).